A 271-amino-acid polypeptide reads, in one-letter code: GATA transcription factor 19 (271 aa).

Residues 1-23 form a disordered region; it reads MAAEPPADGRDPPADDGAAGDGA. One can recognise a Tify domain in the interval 33-68; that stretch reads LSAASEQLTLVYQGEVYVFDPVPPQKVQAVLLVLGG. One can recognise a CCT domain in the interval 95–137; it reads RIASLMRFREKRKERCFDKKIRYSVRKEVAQKMKRRKGQFAGR. The GATA-type zinc finger occupies 166 to 193; sequence CQNCGISSRLTPAMRRGPAGPRSLCNAC. The tract at residues 238–271 is disordered; it reads NQTTMKTDTEMVPEQEQKADVLPPTKEEDSMATS. The segment covering 252-271 has biased composition (basic and acidic residues); the sequence is QEQKADVLPPTKEEDSMATS.

The protein belongs to the type IV zinc-finger family. Class C subfamily.

It is found in the nucleus. In terms of biological role, transcriptional activator that specifically binds 5'-GATA-3' or 5'-GAT-3' motifs within gene promoters. The sequence is that of GATA transcription factor 19 from Oryza sativa subsp. indica (Rice).